A 301-amino-acid chain; its full sequence is N-acetylmuramic acid 6-phosphate etherase (301 aa).

The SIS domain maps to 57-220 (VVERLRAGGR…STISMVRLGK (164 aa)). Glu-85 acts as the Proton donor in catalysis. Residue Glu-116 is part of the active site.

This sequence belongs to the GCKR-like family. MurNAc-6-P etherase subfamily. As to quaternary structure, homodimer.

It catalyses the reaction N-acetyl-D-muramate 6-phosphate + H2O = N-acetyl-D-glucosamine 6-phosphate + (R)-lactate. It participates in amino-sugar metabolism; N-acetylmuramate degradation. Functionally, specifically catalyzes the cleavage of the D-lactyl ether substituent of MurNAc 6-phosphate, producing GlcNAc 6-phosphate and D-lactate. The chain is N-acetylmuramic acid 6-phosphate etherase from Rubrobacter xylanophilus (strain DSM 9941 / JCM 11954 / NBRC 16129 / PRD-1).